A 243-amino-acid polypeptide reads, in one-letter code: DNA repair protein RecO (243 aa).

The protein belongs to the RecO family.

Its function is as follows. Involved in DNA repair and RecF pathway recombination. The protein is DNA repair protein RecO of Caulobacter sp. (strain K31).